We begin with the raw amino-acid sequence, 417 residues long: Probable tubulin polyglutamylase ttll-9 (417 aa).

Residues 23–372 (QRKKKILFKC…EKKLIGNENE (350 aa)) form the TTL domain. Residues 188-191 (QCYV), K201, and D203 contribute to the ATP site.

Belongs to the tubulin--tyrosine ligase family. In terms of tissue distribution, expressed in head sensory neurons.

Its function is as follows. Polyglutamylase that forms polyglutamate side chains on tubulin. Acts when complexed with other proteins. Appears to be dispensable for polar spindle formation in dividing embryonic cells, for cilia-dependent osmotic avoidance and for male mating behavior. Probably by regulating microtubule stability via the glutamylation of tubulin, regulates PLM axon developmental growth. This is Probable tubulin polyglutamylase ttll-9 from Caenorhabditis elegans.